Consider the following 414-residue polypeptide: Thyroid hormone receptor beta-B (414 aa).

The interval 1-59 is modulating; the sequence is MPSSMSVRLFTASAAQRKKIQEGDCCVVLAGKTQGRFILIGAVARVSGYIPSYLDKDEL. NR C4-type zinc fingers lie at residues 60-80 and 98-122; these read CVVC…CEGC and CKYE…FKKC. A DNA-binding region (nuclear receptor) is located at residues 60-134; sequence CVVCGDKATG…VGMATDLVLD (75 aa). The region spanning 170 to 414 is the NR LBD domain; the sequence is EEWELIQVVT…PPLFLEVFED (245 aa).

It belongs to the nuclear hormone receptor family. NR1 subfamily.

It localises to the nucleus. High affinity receptor for triiodothyronine (T3). The polypeptide is Thyroid hormone receptor beta-B (thrb-b) (Xenopus laevis (African clawed frog)).